Reading from the N-terminus, the 358-residue chain is 5,10-methenyltetrahydromethanopterin hydrogenase (358 aa).

It belongs to the HMD family. In terms of assembly, homotetramer.

The enzyme catalyses 5,10-methenyl-5,6,7,8-tetrahydromethanopterin + H2 = 5,10-methylenetetrahydromethanopterin + H(+). Its pathway is one-carbon metabolism; methanogenesis from CO(2); 5,10-methylene-5,6,7,8-tetrahydromethanopterin from 5,10-methenyl-5,6,7,8-tetrahydromethanopterin (hydrogen route): step 1/1. Its activity is regulated as follows. Activity requires salt; 100 mM potassium phosphate, potassium chloride, and sodium chloride are equally effective. Its function is as follows. Catalyzes the reversible reduction of methenyl-H(4)MPT(+) to methylene-H(4)MPT. This chain is 5,10-methenyltetrahydromethanopterin hydrogenase, found in Methanopyrus kandleri (strain AV19 / DSM 6324 / JCM 9639 / NBRC 100938).